Reading from the N-terminus, the 188-residue chain is Threonylcarbamoyl-AMP synthase (188 aa).

The YrdC-like domain maps to Gln3–Gln188.

It belongs to the SUA5 family. TsaC subfamily.

It localises to the cytoplasm. It carries out the reaction L-threonine + hydrogencarbonate + ATP = L-threonylcarbamoyladenylate + diphosphate + H2O. Required for the formation of a threonylcarbamoyl group on adenosine at position 37 (t(6)A37) in tRNAs that read codons beginning with adenine. Catalyzes the conversion of L-threonine, HCO(3)(-)/CO(2) and ATP to give threonylcarbamoyl-AMP (TC-AMP) as the acyladenylate intermediate, with the release of diphosphate. The chain is Threonylcarbamoyl-AMP synthase from Shewanella oneidensis (strain ATCC 700550 / JCM 31522 / CIP 106686 / LMG 19005 / NCIMB 14063 / MR-1).